We begin with the raw amino-acid sequence, 129 residues long: Lysozyme C (129 aa).

The C-type lysozyme domain maps to 1–129; the sequence is KVYGRCELAA…VNAWIRGCRL (129 aa). 4 disulfides stabilise this stretch: C6/C127, C30/C115, C64/C80, and C76/C94. Catalysis depends on residues E35 and D52.

This sequence belongs to the glycosyl hydrolase 22 family. Monomer.

The protein resides in the secreted. The enzyme catalyses Hydrolysis of (1-&gt;4)-beta-linkages between N-acetylmuramic acid and N-acetyl-D-glucosamine residues in a peptidoglycan and between N-acetyl-D-glucosamine residues in chitodextrins.. Its function is as follows. Lysozymes have primarily a bacteriolytic function; those in tissues and body fluids are associated with the monocyte-macrophage system and enhance the activity of immunoagents. The protein is Lysozyme C (LYZ) of Syrmaticus reevesii (Reeves's pheasant).